We begin with the raw amino-acid sequence, 457 residues long: Bifunctional protein GlmU (457 aa).

The segment at 1–230 (MLNVVILAAG…SWETLGVNSR (230 aa)) is pyrophosphorylase. Residues 7–10 (LAAG), K21, Q73, 78–79 (GT), 104–106 (YGD), G140, E155, N170, and N228 contribute to the UDP-N-acetyl-alpha-D-glucosamine site. Mg(2+) is bound at residue D106. Residue N228 coordinates Mg(2+). Positions 231–251 (VQQAQLERAWQSELARRQLEA) are linker. An N-acetyltransferase region spans residues 252 to 457 (GVTLADPARF…EGWKRPVKKS (206 aa)). Positions 334 and 352 each coordinate UDP-N-acetyl-alpha-D-glucosamine. The active-site Proton acceptor is H364. UDP-N-acetyl-alpha-D-glucosamine is bound by residues Y367 and N378. Acetyl-CoA-binding positions include A381, 387–388 (NY), S406, A424, and R441.

This sequence in the N-terminal section; belongs to the N-acetylglucosamine-1-phosphate uridyltransferase family. In the C-terminal section; belongs to the transferase hexapeptide repeat family. In terms of assembly, homotrimer. Requires Mg(2+) as cofactor.

Its subcellular location is the cytoplasm. It catalyses the reaction alpha-D-glucosamine 1-phosphate + acetyl-CoA = N-acetyl-alpha-D-glucosamine 1-phosphate + CoA + H(+). The catalysed reaction is N-acetyl-alpha-D-glucosamine 1-phosphate + UTP + H(+) = UDP-N-acetyl-alpha-D-glucosamine + diphosphate. Its pathway is nucleotide-sugar biosynthesis; UDP-N-acetyl-alpha-D-glucosamine biosynthesis; N-acetyl-alpha-D-glucosamine 1-phosphate from alpha-D-glucosamine 6-phosphate (route II): step 2/2. It functions in the pathway nucleotide-sugar biosynthesis; UDP-N-acetyl-alpha-D-glucosamine biosynthesis; UDP-N-acetyl-alpha-D-glucosamine from N-acetyl-alpha-D-glucosamine 1-phosphate: step 1/1. It participates in bacterial outer membrane biogenesis; LPS lipid A biosynthesis. Its function is as follows. Catalyzes the last two sequential reactions in the de novo biosynthetic pathway for UDP-N-acetylglucosamine (UDP-GlcNAc). The C-terminal domain catalyzes the transfer of acetyl group from acetyl coenzyme A to glucosamine-1-phosphate (GlcN-1-P) to produce N-acetylglucosamine-1-phosphate (GlcNAc-1-P), which is converted into UDP-GlcNAc by the transfer of uridine 5-monophosphate (from uridine 5-triphosphate), a reaction catalyzed by the N-terminal domain. The protein is Bifunctional protein GlmU of Bordetella bronchiseptica (strain ATCC BAA-588 / NCTC 13252 / RB50) (Alcaligenes bronchisepticus).